We begin with the raw amino-acid sequence, 136 residues long: Monothiol glutaredoxin-S3 (136 aa).

One can recognise a Glutaredoxin domain in the interval 18–135; the sequence is EREVRRAVEE…PVLKQAGALW (118 aa). [2Fe-2S] cluster is bound at residue Cys-38. Positions 133–136 match the Responsive for interaction with TGA factors motif; the sequence is ALWL.

Belongs to the glutaredoxin family. CC-type subfamily.

It localises to the cytoplasm. The protein localises to the nucleus. Functionally, may only reduce GSH-thiol disulfides, but not protein disulfides. This Oryza sativa subsp. japonica (Rice) protein is Monothiol glutaredoxin-S3 (GRXS3).